Here is a 447-residue protein sequence, read N- to C-terminus: Naphthalene 1,2-dioxygenase system, large oxygenase component (447 aa).

Positions 37-135 constitute a Rieske domain; it reads WLFLTHDSLI…IKKKCLGLKE (99 aa). Positions 79, 81, 99, and 102 each coordinate [2Fe-2S] cluster. Positions 206, 211, and 360 each coordinate Fe cation.

This sequence belongs to the bacterial ring-hydroxylating dioxygenase alpha subunit family. As to quaternary structure, the naphthalene dioxygenase (NDO) multicomponent enzyme system is composed of an electron transfer component and a dioxygenase component (iron sulfur protein (ISP)). The electron transfer component is composed of a ferredoxin reductase (NagAa) and a ferredoxin (NagAb), and the dioxygenase component is formed by a large alpha subunit (NagAc) and a small beta subunit (NagAd). [2Fe-2S] cluster serves as cofactor. Requires Fe(2+) as cofactor.

It catalyses the reaction naphthalene + NADH + O2 + H(+) = (1R,2S)-1,2-dihydronaphthalene-1,2-diol + NAD(+). Its pathway is aromatic compound metabolism; naphthalene degradation. In terms of biological role, component of the naphthalene dioxygenase (NDO) multicomponent enzyme system which catalyzes the incorporation of both atoms of molecular oxygen into naphthalene to form cis-(1R,2S)-dihydroxy-1,2-dihydronaphthalene. The alpha subunit has a catalytic role in the holoenzyme. Also able to use styrene as substrate. The chain is Naphthalene 1,2-dioxygenase system, large oxygenase component from Ralstonia sp.